The chain runs to 1179 residues: MAGKVIQSGRHRQRRTYSRINEVLGLPNLIEIQQKSYQWFLDEGLREMFQDISPIQDFTGNLVLEFIDYSLGEPKYDVDESKERDVTYAAPLRVKVRLLNKETGEVKEQEVFMGDFPLMTETGTFIINGAERVIVSQLVRSPSVYYNTKVDKNGKQTFTATVIPNRGAWLELETDAKDVIYVRIDRTRKIPVTVLLRALGFGSDIEILNLLGEDEYIKNTLEKDNTDSTEKALIEIYERLRPGEPPTVENAKSLLISRFFDPKRYDLASVGRYKMNKKLHLKNRLYNQRLAETLIDTTTGEIFAEAGQMIDRRVLERIVPALEGSIGFIDVRTHGGVLEDEAIHLQSINIFSPIEDGKIIKVIGNGNVDKSFKHITPADIVSAINYFMNLLHSVGSTDDIDHLGNRRLRSVGELLQNQFRIGLSRMERVVRERMSIQDQNQITPQALINIRPVIASLKEFFGSSQLSQFMDQTNPLAELTHKRRLSALGPGGLTRERAGFEVRDVHHSHYGRMCPIETPEGPNIGLINSLSSFARINDYGFIETPRRKVDPETGFVLTDISYLTADEEDVFNVAQANQPLDEDGRFVNDMVICRRKGEILSVPRDKVDFMDVSPKQVVSVATALIPFLENDDANRALMGSNMQRQAVPLLIPQAPFVGTGMEHKAAQDSGVAIVAKHPGQVERVTAREIWIRRYQEIDGRKVAGDLDKYKMHKFIRSNQGTCINQRPIVSTGDWIEKGDIVGDGPSTEKGELALGRNVIVAFMTWEGYNYEDAILLSEKLVKDDVYTSIHIEEYESEARDTKLGPEEITRDIPNVGEDALKNLDERGIIRVGAEIQDGDILVGKVTPKGVTELTAEERLLHAIFGEKAREVRDTSLRVPHGGSGIIVDVKVFTRENGDELPPGVNQLVRVYIAQKRKISVGDKMAGRHGNKGVIARIMAEEDMPFLPDGSPVEIVLNPLGVPSRMNIGQVLETHLGMAAKLLGIHVATPVFDGARQAEVFETLAEAGLDRDGKTILFDGRTGEPFDRRVTVGCVYMLKLAHLVDDKIHARSTGPYSLVTQQPLGGKAQFGGQRFGEMEVWALEAYGAAYTLQEILTVKSDDVVGRVKTYEAIVKGENVPEPGVPESFKVLIKELQSLGMDVKILSGDEQEIEMREMEDEDEGNGEKLNLVLEGGSLNEE.

Residues 1153 to 1162 (MREMEDEDEG) show a composition bias toward acidic residues. The segment at 1153 to 1179 (MREMEDEDEGNGEKLNLVLEGGSLNEE) is disordered.

It belongs to the RNA polymerase beta chain family. The RNAP catalytic core consists of 2 alpha, 1 beta, 1 beta' and 1 omega subunit. When a sigma factor is associated with the core the holoenzyme is formed, which can initiate transcription.

The enzyme catalyses RNA(n) + a ribonucleoside 5'-triphosphate = RNA(n+1) + diphosphate. DNA-dependent RNA polymerase catalyzes the transcription of DNA into RNA using the four ribonucleoside triphosphates as substrates. The sequence is that of DNA-directed RNA polymerase subunit beta from Brevibacillus brevis (strain 47 / JCM 6285 / NBRC 100599).